The chain runs to 359 residues: Holliday junction branch migration complex subunit RuvB (359 aa).

The interval 1-22 (MAIVSSNAEPSKGAPRPKPSRV) is disordered. Residues 13-204 (GAPRPKPSRV…FGLIQRLEFY (192 aa)) form a large ATPase domain (RuvB-L) region. 9 residues coordinate ATP: Leu43, Arg44, Gly85, Lys88, Thr89, Thr90, Arg194, Tyr204, and Arg241. Thr89 serves as a coordination point for Mg(2+). The segment at 205–276 (GQEDLQAIVM…LVDEALTLHR (72 aa)) is small ATPAse domain (RuvB-S). Positions 279-359 (GKGLDASDRR…GWPADEGDAA (81 aa)) are head domain (RuvB-H). Residues Arg334 and Arg339 each coordinate DNA.

It belongs to the RuvB family. In terms of assembly, homohexamer. Forms an RuvA(8)-RuvB(12)-Holliday junction (HJ) complex. HJ DNA is sandwiched between 2 RuvA tetramers; dsDNA enters through RuvA and exits via RuvB. An RuvB hexamer assembles on each DNA strand where it exits the tetramer. Each RuvB hexamer is contacted by two RuvA subunits (via domain III) on 2 adjacent RuvB subunits; this complex drives branch migration. In the full resolvosome a probable DNA-RuvA(4)-RuvB(12)-RuvC(2) complex forms which resolves the HJ.

It localises to the cytoplasm. It catalyses the reaction ATP + H2O = ADP + phosphate + H(+). The RuvA-RuvB-RuvC complex processes Holliday junction (HJ) DNA during genetic recombination and DNA repair, while the RuvA-RuvB complex plays an important role in the rescue of blocked DNA replication forks via replication fork reversal (RFR). RuvA specifically binds to HJ cruciform DNA, conferring on it an open structure. The RuvB hexamer acts as an ATP-dependent pump, pulling dsDNA into and through the RuvAB complex. RuvB forms 2 homohexamers on either side of HJ DNA bound by 1 or 2 RuvA tetramers; 4 subunits per hexamer contact DNA at a time. Coordinated motions by a converter formed by DNA-disengaged RuvB subunits stimulates ATP hydrolysis and nucleotide exchange. Immobilization of the converter enables RuvB to convert the ATP-contained energy into a lever motion, pulling 2 nucleotides of DNA out of the RuvA tetramer per ATP hydrolyzed, thus driving DNA branch migration. The RuvB motors rotate together with the DNA substrate, which together with the progressing nucleotide cycle form the mechanistic basis for DNA recombination by continuous HJ branch migration. Branch migration allows RuvC to scan DNA until it finds its consensus sequence, where it cleaves and resolves cruciform DNA. The polypeptide is Holliday junction branch migration complex subunit RuvB (Synechococcus sp. (strain CC9311)).